Reading from the N-terminus, the 720-residue chain is Catalase-peroxidase (720 aa).

Positions 94–222 form a cross-link, tryptophyl-tyrosyl-methioninium (Trp-Tyr) (with M-248); sequence WHAAGTYRIA…LAAVTMGLIY (129 aa). Residue His95 is the Proton acceptor of the active site. Residues 222-248 constitute a cross-link (tryptophyl-tyrosyl-methioninium (Tyr-Met) (with W-94)); the sequence is YVNPEGVDGNPDPLKTAHDVRVTFARM. A heme b-binding site is contributed by His263.

This sequence belongs to the peroxidase family. Peroxidase/catalase subfamily. As to quaternary structure, homodimer. Heme b serves as cofactor. Formation of the three residue Trp-Tyr-Met cross-link is important for the catalase, but not the peroxidase activity of the enzyme.

The enzyme catalyses H2O2 + AH2 = A + 2 H2O. It carries out the reaction 2 H2O2 = O2 + 2 H2O. In terms of biological role, bifunctional enzyme with both catalase and broad-spectrum peroxidase activity. The protein is Catalase-peroxidase of Synechococcus elongatus (strain ATCC 33912 / PCC 7942 / FACHB-805) (Anacystis nidulans R2).